We begin with the raw amino-acid sequence, 465 residues long: Auxin transporter-like protein 3 (465 aa).

Residues 1–52 (MTSEKVETVVAGNYLEMEREEEGSKSTTGKLSKFFWHGGSVYDAWFSCASNQ) are Cytoplasmic-facing. A helical membrane pass occupies residues 53–70 (VAQVLLTLPYSFSQLGML). Residues 71 to 72 (SG) lie on the Extracellular side of the membrane. A helical membrane pass occupies residues 73 to 93 (ILFQIFYGLMGSWTAYIISVL). Residues 94–129 (YVEYRTRKEREKVDFRNHVIQWFEVLDGLLGKHWRN) lie on the Cytoplasmic side of the membrane. The helical transmembrane segment at 130-150 (LGLFFNCTFLLFGSVIQLIAC) threads the bilayer. The Extracellular segment spans residues 151–165 (ASNIYYINDHLDKRT). Residues 166–186 (WTYIFGACCATTVFIPSFHNY) traverse the membrane as a helical segment. Topologically, residues 187–189 (RIW) are cytoplasmic. A helical transmembrane segment spans residues 190-210 (SFLGLVMTTYTAWYMTIASIL). Over 211–225 (HGQAEDVKHSGPTKL) the chain is Extracellular. The helical transmembrane segment at 226-246 (VLYFTGATNILYTFGGHAVTV) threads the bilayer. Residues 247–259 (EIMHAMWKPQKFK) are Cytoplasmic-facing. The helical transmembrane segment at 260-280 (MIYLIATLYVMTLTLPSAAAV) threads the bilayer. The Extracellular portion of the chain corresponds to 281 to 307 (YWAFGDNLLTHSNALSLLPRTGFRDTA). A helical membrane pass occupies residues 308-328 (VILMLIHQFITFGFACTPLYF). At 329 to 349 (VWEKFLGVHETKSLLKRALVR) the chain is on the cytoplasmic side. Residues 350-370 (LPVVIPIWFLAIIFPFFGPIN) traverse the membrane as a helical segment. The Extracellular segment spans residues 371–374 (STVG). A helical membrane pass occupies residues 375-395 (SLLVSFTVYIIPALAHMVTFA). At 396–421 (SAPARENAVERPPSFLGGWVGLYSVN) the chain is on the cytoplasmic side. The helical transmembrane segment at 422 to 442 (VFVAVWVLVVGFGLGGWASML) threads the bilayer. The Extracellular segment spans residues 443-465 (NFVHQIKTFGLFAKCFQCPPHKA).

Belongs to the amino acid/polyamine transporter 2 family. Amino acid/auxin permease (AAAP) (TC 2.A.18.1) subfamily. As to expression, shoots and roots of nodulating plants. Low levels in roots, nodules, stems, petioles, leaves, shoot apices and flowers.

The protein localises to the cell membrane. In terms of biological role, carrier protein involved in proton-driven auxin influx. Mediates the formation of auxin gradient from developing leaves (site of auxin biosynthesis) to tips by contributing to the loading of auxin in vascular tissues and facilitating acropetal (base to tip) auxin transport within inner tissues of the root apex, and basipetal (tip to base) auxin transport within outer tissues of the root apex. May be involved in lateral roots and nodules formation. This chain is Auxin transporter-like protein 3 (LAX3), found in Medicago truncatula (Barrel medic).